Reading from the N-terminus, the 241-residue chain is Transcription factor HEC1 (241 aa).

The bHLH domain occupies 128-177 (ISKDPQSVAARHRRERISERIRILQRLVPGGTKMDTASMLDEAIHYVKFL).

Homodimer. Interacts with SPT. Interacts with BZIP30. Flowers, especially in gynoecium.

It localises to the nucleus. Required for the female reproductive tract development and fertility. In Arabidopsis thaliana (Mouse-ear cress), this protein is Transcription factor HEC1 (HEC1).